We begin with the raw amino-acid sequence, 582 residues long: 2-succinyl-5-enolpyruvyl-6-hydroxy-3-cyclohexene-1-carboxylate synthase (582 aa).

This sequence belongs to the TPP enzyme family. MenD subfamily. In terms of assembly, homodimer. Mg(2+) is required as a cofactor. The cofactor is Mn(2+). Thiamine diphosphate serves as cofactor.

It carries out the reaction isochorismate + 2-oxoglutarate + H(+) = 5-enolpyruvoyl-6-hydroxy-2-succinyl-cyclohex-3-ene-1-carboxylate + CO2. It participates in quinol/quinone metabolism; 1,4-dihydroxy-2-naphthoate biosynthesis; 1,4-dihydroxy-2-naphthoate from chorismate: step 2/7. The protein operates within cofactor biosynthesis; phylloquinone biosynthesis. Its function is as follows. Catalyzes the thiamine diphosphate-dependent decarboxylation of 2-oxoglutarate and the subsequent addition of the resulting succinic semialdehyde-thiamine pyrophosphate anion to isochorismate to yield 2-succinyl-5-enolpyruvyl-6-hydroxy-3-cyclohexene-1-carboxylate (SEPHCHC). In Prochlorococcus marinus (strain MIT 9303), this protein is 2-succinyl-5-enolpyruvyl-6-hydroxy-3-cyclohexene-1-carboxylate synthase.